We begin with the raw amino-acid sequence, 386 residues long: Zinc finger protein 385A (386 aa).

A Matrin-type 1 zinc finger spans residues 74 to 98 (ISCNICQIRFNSQSQAEAHYKGNRH). A disordered region spans residues 90-193 (EAHYKGNRHA…ASLPGGSKEE (104 aa)). A compositionally biased stretch (basic and acidic residues) spans 103–121 (KGIEAAKTRGREPGVREPG). The tract at residues 145–351 (NGLGPAPGSP…AGSPLSLRPA (207 aa)) is necessary for binding to ITPR1, CEBPA and p53/TP53 mRNAs. Residue Ser-185 is modified to Phosphoserine. Residues 201 to 225 (LYCALCKVAVNSLSQLEAHNKGTKH) form a Matrin-type 2 zinc finger. Thr-248 is modified (phosphothreonine). Residues 261–285 (FHCEICNVKVNSEVQLKQHISSRRH) form a Matrin-type 3 zinc finger. A disordered region spans residues 279 to 309 (HISSRRHRDGVAGKPNPLLSRHKKSRGAGEL).

Interacts with ELAVL1; the interaction is indirect, mRNA-dependent and may regulate p53/TP53 expression. Interacts with p53/TP53; the interaction is direct and enhances p53/TP53 transactivation functions on cell-cycle arrest target genes, resulting in growth arrest. Ubiquitinated upon prolonged exposure to genotoxic stress, which leads to proteasomal degradation of ZNF385A and releases p53/TP53 from cell-cycle arrest target gene promoters. In terms of tissue distribution, expressed predominantly in the retina.

The protein resides in the cytoplasm. It localises to the nucleus. The protein localises to the nucleolus. It is found in the cell projection. Its subcellular location is the dendrite. RNA-binding protein that affects the localization and the translation of a subset of mRNA. May play a role in adipogenesis through binding to the 3'-UTR of CEBPA mRNA and regulation of its translation. Targets ITPR1 mRNA to dendrites in Purkinje cells, and may regulate its activity-dependent translation. With ELAVL1, binds the 3'-UTR of p53/TP53 mRNAs to control their nuclear export induced by CDKN2A. Hence, may regulate p53/TP53 expression and mediate in part the CDKN2A anti-proliferative activity. May also bind CCNB1 mRNA. Alternatively, may also regulate p53/TP53 activity through direct protein-protein interaction. Interacts with p53/TP53 and promotes cell-cycle arrest over apoptosis enhancing preferentially the DNA binding and transactivation of p53/TP53 on cell-cycle arrest target genes over proapoptotic target genes. May also regulate the ubiquitination and stability of CDKN1A promoting DNA damage-induced cell cycle arrest. Also plays a role in megakaryocytes differentiation. This chain is Zinc finger protein 385A (ZNF385A), found in Homo sapiens (Human).